The primary structure comprises 75 residues: UPF0235 protein Mflv_3569 (75 aa).

Belongs to the UPF0235 family.

This chain is UPF0235 protein Mflv_3569, found in Mycolicibacterium gilvum (strain PYR-GCK) (Mycobacterium gilvum (strain PYR-GCK)).